Here is a 156-residue protein sequence, read N- to C-terminus: Ribosome maturation factor RimP (156 aa).

Belongs to the RimP family.

It is found in the cytoplasm. Its function is as follows. Required for maturation of 30S ribosomal subunits. This chain is Ribosome maturation factor RimP, found in Bacillus subtilis (strain 168).